The chain runs to 216 residues: MKLNVNPTRMELTKLKKRLTTATRGHKLLKDKQDELMRRFIGMIKKNNELRKDVEKELEGSFKDFLMASAVMSPEFLEEAVAYPKESISVDVKKQNIMSVNVPVFDFKRKLEGDKGSIFPYGFANTSAELDGAIEKLYGILPKLLELAKVEKACQLMADEIEKTRRRVNALEYMTIPQLEETIKFIQMKLDENERSTVTRLMKIKSMMEEKQSNMV.

This sequence belongs to the V-ATPase D subunit family.

Produces ATP from ADP in the presence of a proton gradient across the membrane. The sequence is that of V-type ATP synthase subunit D from Clostridium botulinum (strain ATCC 19397 / Type A).